A 220-amino-acid chain; its full sequence is Small ribosomal subunit protein uS3 (220 aa).

The KH type-2 domain occupies 39-107 (IREHVEGRLK…RVHINISEIK (69 aa)).

The protein belongs to the universal ribosomal protein uS3 family. In terms of assembly, part of the 30S ribosomal subunit. Forms a tight complex with proteins S10 and S14.

In terms of biological role, binds the lower part of the 30S subunit head. Binds mRNA in the 70S ribosome, positioning it for translation. This is Small ribosomal subunit protein uS3 from Shouchella clausii (strain KSM-K16) (Alkalihalobacillus clausii).